The chain runs to 243 residues: UPF0246 protein M28_Spy1772 (243 aa).

This sequence belongs to the UPF0246 family.

The polypeptide is UPF0246 protein M28_Spy1772 (Streptococcus pyogenes serotype M28 (strain MGAS6180)).